The primary structure comprises 66 residues: DNA-directed RNA polymerase subunit Rpo10 (66 aa).

The Zn(2+) site is built by Cys7, Cys10, Cys44, and Cys45.

The protein belongs to the archaeal Rpo10/eukaryotic RPB10 RNA polymerase subunit family. Part of the 13-subunit RNA polymerase complex. It depends on Zn(2+) as a cofactor.

It is found in the cytoplasm. The enzyme catalyses RNA(n) + a ribonucleoside 5'-triphosphate = RNA(n+1) + diphosphate. In terms of biological role, DNA-dependent RNA polymerase (RNAP) catalyzes the transcription of DNA into RNA using the four ribonucleoside triphosphates as substrates. This is DNA-directed RNA polymerase subunit Rpo10 from Sulfolobus acidocaldarius (strain ATCC 33909 / DSM 639 / JCM 8929 / NBRC 15157 / NCIMB 11770).